The primary structure comprises 268 residues: Indole-3-glycerol phosphate synthase (268 aa).

Belongs to the TrpC family.

The enzyme catalyses 1-(2-carboxyphenylamino)-1-deoxy-D-ribulose 5-phosphate + H(+) = (1S,2R)-1-C-(indol-3-yl)glycerol 3-phosphate + CO2 + H2O. It participates in amino-acid biosynthesis; L-tryptophan biosynthesis; L-tryptophan from chorismate: step 4/5. In Acinetobacter baumannii (strain ACICU), this protein is Indole-3-glycerol phosphate synthase.